We begin with the raw amino-acid sequence, 382 residues long: Alcohol dehydrogenase 4 (382 aa).

This sequence belongs to the iron-containing alcohol dehydrogenase family. Homodimer. Zn(2+) serves as cofactor. Fe(2+) is required as a cofactor.

It localises to the mitochondrion. The catalysed reaction is a primary alcohol + NAD(+) = an aldehyde + NADH + H(+). It catalyses the reaction a secondary alcohol + NAD(+) = a ketone + NADH + H(+). Inhibited by EDTA. Its function is as follows. Reduces acetaldehyde to ethanol during glucose fermentation. Specific for ethanol. Shows drastically reduced activity towards primary alcohols from 4 carbon atoms upward. Isomers of aliphatic alcohol, as well as secondary alcohols and glycerol are not used at all. This chain is Alcohol dehydrogenase 4 (ADH4), found in Saccharomyces cerevisiae (strain YJM789) (Baker's yeast).